The following is a 199-amino-acid chain: dTTP/UTP pyrophosphatase (199 aa).

The Proton acceptor role is filled by aspartate 73.

The protein belongs to the Maf family. YhdE subfamily. It depends on a divalent metal cation as a cofactor.

The protein resides in the cytoplasm. The enzyme catalyses dTTP + H2O = dTMP + diphosphate + H(+). It carries out the reaction UTP + H2O = UMP + diphosphate + H(+). In terms of biological role, nucleoside triphosphate pyrophosphatase that hydrolyzes dTTP and UTP. May have a dual role in cell division arrest and in preventing the incorporation of modified nucleotides into cellular nucleic acids. This Caldicellulosiruptor bescii (strain ATCC BAA-1888 / DSM 6725 / KCTC 15123 / Z-1320) (Anaerocellum thermophilum) protein is dTTP/UTP pyrophosphatase.